Consider the following 338-residue polypeptide: Holliday junction branch migration complex subunit RuvB (338 aa).

Residues 1 to 184 form a large ATPase domain (RuvB-L) region; that stretch reads MTEEERLLSA…FGIISHMEYY (184 aa). Residues Leu-23, Arg-24, Gly-65, Lys-68, Thr-69, Thr-70, 131-133, Arg-174, Tyr-184, and Arg-221 contribute to the ATP site; that span reads EDF. Thr-69 lines the Mg(2+) pocket. The small ATPAse domain (RuvB-S) stretch occupies residues 185-255; the sequence is QEQDLKEIVL…IADKALTLLQ (71 aa). Residues 258 to 338 form a head domain (RuvB-H) region; that stretch reads HQGLDYVDQK…GYDYLEGRKN (81 aa). Residues Arg-313 and Arg-318 each contribute to the DNA site.

The protein belongs to the RuvB family. As to quaternary structure, homohexamer. Forms an RuvA(8)-RuvB(12)-Holliday junction (HJ) complex. HJ DNA is sandwiched between 2 RuvA tetramers; dsDNA enters through RuvA and exits via RuvB. An RuvB hexamer assembles on each DNA strand where it exits the tetramer. Each RuvB hexamer is contacted by two RuvA subunits (via domain III) on 2 adjacent RuvB subunits; this complex drives branch migration. In the full resolvosome a probable DNA-RuvA(4)-RuvB(12)-RuvC(2) complex forms which resolves the HJ.

The protein resides in the cytoplasm. It carries out the reaction ATP + H2O = ADP + phosphate + H(+). Its function is as follows. The RuvA-RuvB-RuvC complex processes Holliday junction (HJ) DNA during genetic recombination and DNA repair, while the RuvA-RuvB complex plays an important role in the rescue of blocked DNA replication forks via replication fork reversal (RFR). RuvA specifically binds to HJ cruciform DNA, conferring on it an open structure. The RuvB hexamer acts as an ATP-dependent pump, pulling dsDNA into and through the RuvAB complex. RuvB forms 2 homohexamers on either side of HJ DNA bound by 1 or 2 RuvA tetramers; 4 subunits per hexamer contact DNA at a time. Coordinated motions by a converter formed by DNA-disengaged RuvB subunits stimulates ATP hydrolysis and nucleotide exchange. Immobilization of the converter enables RuvB to convert the ATP-contained energy into a lever motion, pulling 2 nucleotides of DNA out of the RuvA tetramer per ATP hydrolyzed, thus driving DNA branch migration. The RuvB motors rotate together with the DNA substrate, which together with the progressing nucleotide cycle form the mechanistic basis for DNA recombination by continuous HJ branch migration. Branch migration allows RuvC to scan DNA until it finds its consensus sequence, where it cleaves and resolves cruciform DNA. The chain is Holliday junction branch migration complex subunit RuvB from Enterococcus faecalis (strain ATCC 700802 / V583).